The chain runs to 263 residues: Proteasome subunit alpha type-1 (263 aa).

M1 carries the post-translational modification N-acetylmethionine. S110 is modified (phosphoserine; alternate). A glycan (O-linked (GlcNAc) serine; alternate) is linked at S110. Residue K115 forms a Glycyl lysine isopeptide (Lys-Gly) (interchain with G-Cter in ubiquitin) linkage. S177 is subject to Phosphoserine. A Glycyl lysine isopeptide (Lys-Gly) (interchain with G-Cter in ubiquitin) cross-link involves residue K208. Residues 232–263 (FLEGLEERPQRKAQPTQPADEPAEKADEPMEH) are disordered. Over residues 253 to 263 (PAEKADEPMEH) the composition is skewed to basic and acidic residues.

It belongs to the peptidase T1A family. The 26S proteasome consists of a 20S proteasome core and two 19S regulatory subunits. The 20S proteasome core is a barrel-shaped complex made of 28 subunits that are arranged in four stacked rings. The two outer rings are each formed by seven alpha subunits, and the two inner rings are formed by seven beta subunits. The proteolytic activity is exerted by three beta-subunits PSMB5, PSMB6 and PSMB7. Interacts with NOTCH3. Interacts with ZFAND1.

It is found in the cytoplasm. It localises to the nucleus. Component of the 20S core proteasome complex involved in the proteolytic degradation of most intracellular proteins. This complex plays numerous essential roles within the cell by associating with different regulatory particles. Associated with two 19S regulatory particles, forms the 26S proteasome and thus participates in the ATP-dependent degradation of ubiquitinated proteins. The 26S proteasome plays a key role in the maintenance of protein homeostasis by removing misfolded or damaged proteins that could impair cellular functions, and by removing proteins whose functions are no longer required. Associated with the PA200 or PA28, the 20S proteasome mediates ubiquitin-independent protein degradation. This type of proteolysis is required in several pathways including spermatogenesis (20S-PA200 complex) or generation of a subset of MHC class I-presented antigenic peptides (20S-PA28 complex). This Bos taurus (Bovine) protein is Proteasome subunit alpha type-1 (PSMA1).